Here is a 461-residue protein sequence, read N- to C-terminus: Serine/threonine-protein kinase ppk24, mitochondrial (461 aa).

One can recognise a Protein kinase domain in the interval 120–416; the sequence is FQHLKSIAKG…LDSILGTAWV (297 aa). Residues 126–134 and Lys153 contribute to the ATP site; that span reads IAKGATSTI. Asp256 (proton acceptor) is an active-site residue.

Belongs to the protein kinase superfamily. Ser/Thr protein kinase family.

Its subcellular location is the mitochondrion. The catalysed reaction is L-seryl-[protein] + ATP = O-phospho-L-seryl-[protein] + ADP + H(+). It carries out the reaction L-threonyl-[protein] + ATP = O-phospho-L-threonyl-[protein] + ADP + H(+). In terms of biological role, has a role late in meiosis. The protein is Serine/threonine-protein kinase ppk24, mitochondrial (ppk24) of Schizosaccharomyces pombe (strain 972 / ATCC 24843) (Fission yeast).